Here is a 262-residue protein sequence, read N- to C-terminus: Trypsin eta (262 aa).

The first 22 residues, M1–A22, serve as a signal peptide directing secretion. Residues Q23–R27 constitute a propeptide, activation peptide. The Peptidase S1 domain occupies I28–T259. The cysteines at positions 59 and 75 are disulfide-linked. Residues H74 and D120 each act as charge relay system in the active site. 2 disulfide bridges follow: C185-C200 and C211-C235. The active-site Charge relay system is S215.

The protein belongs to the peptidase S1 family.

The protein resides in the secreted. It is found in the extracellular space. The catalysed reaction is Preferential cleavage: Arg-|-Xaa, Lys-|-Xaa.. The protein is Trypsin eta (etaTry) of Drosophila melanogaster (Fruit fly).